A 571-amino-acid chain; its full sequence is Urease subunit alpha (571 aa).

Residues 133–571 enclose the Urease domain; it reads GGIDTHVHFV…LPLTQRYFLF (439 aa). The Ni(2+) site is built by H138, H140, and K221. An N6-carboxylysine modification is found at K221. Residue H223 participates in substrate binding. Ni(2+)-binding residues include H250 and H276. H324 (proton donor) is an active-site residue. Position 364 (D364) interacts with Ni(2+).

It belongs to the metallo-dependent hydrolases superfamily. Urease alpha subunit family. As to quaternary structure, heterotrimer of UreA (gamma), UreB (beta) and UreC (alpha) subunits. Three heterotrimers associate to form the active enzyme. The cofactor is Ni cation. In terms of processing, carboxylation allows a single lysine to coordinate two nickel ions.

The protein localises to the cytoplasm. It carries out the reaction urea + 2 H2O + H(+) = hydrogencarbonate + 2 NH4(+). It participates in nitrogen metabolism; urea degradation; CO(2) and NH(3) from urea (urease route): step 1/1. This chain is Urease subunit alpha, found in Staphylococcus xylosus.